The following is an 873-amino-acid chain: Disks large homolog 1 (873 aa).

Positions 4 to 64 (RQKDAQRALQ…YYEVSLQDTE (61 aa)) constitute an L27 domain. A disordered region spans residues 62-135 (DTEDKPIEDS…SPHIPGDARP (74 aa)). Basic and acidic residues predominate over residues 63-77 (TEDKPIEDSSLKSRE). Residues 85 to 96 (WNLSVPPSTTGP) are compositionally biased toward polar residues. PDZ domains lie at 230-317 (EITL…RRRK) and 325-412 (DVKL…AKPT). Positions 441 to 456 (SYLSQPLTPATPSRYS) are enriched in polar residues. The tract at residues 441-464 (SYLSQPLTPATPSRYSPVSKGMLG) is disordered. The region spanning 474-555 (KIVLHRGTTG…TVTIIAQYRP (82 aa)) is the PDZ 3 domain. A disordered region spans residues 636 to 662 (NKDSGEQDTSDVDQHVTSNASDSESSF). Over residues 650–662 (HVTSNASDSESSF) the composition is skewed to polar residues. A Guanylate kinase-like domain is found at 683 to 858 (SRPVIILGPM…IYNQVKQIIE (176 aa)).

It belongs to the MAGUK family.

It is found in the cell membrane. The protein localises to the endoplasmic reticulum membrane. Its subcellular location is the cell junction. It localises to the apical cell membrane. Functionally, essential multidomain scaffolding protein required for normal development. Recruits channels, receptors and signaling molecules to discrete plasma membrane domains in polarized cells. Promotes epithelial cell layer barrier function via maintaining cell-cell adhesion. May play a role in adherens junction assembly, signal transduction and cell proliferation. May play a role in synapse assembly and function. The sequence is that of Disks large homolog 1 (dlg1) from Danio rerio (Zebrafish).